The following is a 1150-amino-acid chain: MHPPEATTKMSSVRFMVTPTKIDDIPGLSDTSPDLSSRSSSRVRFSSRESVPETSRSEPMSELSGATTSLATVALDPSSDRTSNPQDVTEDPSQNSITGEHSQLLDDGHKKARNAYLNNSNYEEGDEYFDKNLALFEEEMDTRPKVSSLLNRMANYTNLTQGAKEHEEAENITEGKKKPTKSPQMGTFMGVYLPCLQNIFGVILFLRLTWVVGTAGILQAFAIVLICCCCTMLTAISMSAIATNGVVPAGGSYFMISRALGPEFGGAVGLCFYLGTTFAAAMYILGAIEIFLVYIVPRAAIFRSDDALKESAAMLNNMRVYGTAFLVLMVLVVFIGVRYVNKFASLFLACVIVSILAIYAGAIKSSFAPPHFPVCMLGNRTLSSRHLDICSKTKEVDNMTVPSKLWGFFCNSSQFFNATCDEYFVHNNVISIQGIPGLASGIITENLWSNYLPKGEIIEKPSAKSSDVLGNLNHEYVLADITTSFTLLVGIFFPSVTGIMAGSNRSGDLKDAQKSIPIGTILAILTTSFVYLSNVVLFGACIEGVVLRDKFGDAVKGNLVVGTLSWPSPWVIVIGSFFSTCGAGLQSLTGAPRLLQAIAKDNIIPFLRVFGHSKANGEPTWALLLTAAIAELGILIASLDLVAPILSMFFLMCYLFVNLACALQTLLRTPNWRPRFRYYHWALSFMGMSICLALMFISSWYYAIVAMVIAGMIYKYIEYQGAEKEWGDGIRGLSLSAARFALLRLEEGPPHTKNWRPQLLVLLKLDEDLHVKHPRLLTFASQLKAGKGLTIVGSVIVGNFLENYGDALAAEQTIKHLMEAEKVKGFCQLVVAAKLKEGISHLIQSCGLGGMKHNTVVMGWPNGWRQSEDARAWKTFIGTVRVTTAAHLALLVAKNVSFFPSNVEQFSEGNIDVWWIVHDGGMLMLLPFLLKQHKVWRKCSIRIFTVAQLEDNSIQMKKDLATFLYHLRIEAEVEVVEMHDSDISAYTYERTLMMEQRSQMLRHMRLSKTERDREAQLVKDRNSMLRLTSIGSDEDEETETYQEKVHMTWTKDKYMASRGQKVKSMEGFQDLLNMRPDQSNVRRMHTAVKLNEVIVNKSHEAKLVLLNMPGPPRNPEGDENYMEFLEVLTEGLERVLLVRGGGSEVITIYS.

The tract at residues 1-108 is disordered; the sequence is MHPPEATTKM…GEHSQLLDDG (108 aa). Residues 1-135 lie on the Cytoplasmic side of the membrane; it reads MHPPEATTKM…DEYFDKNLAL (135 aa). Positions 28-45 are enriched in low complexity; that stretch reads LSDTSPDLSSRSSSRVRF. Phosphoserine is present on serine 32. A compositionally biased stretch (polar residues) spans 80–101; sequence DRTSNPQDVTEDPSQNSITGEH. Serine 120 is subject to Phosphoserine. Residues 136 to 158 form a discontinuously helical membrane-spanning segment; that stretch reads FEEEMDTRPKVSSLLNRMANYTN. The K(+) site is built by serine 147 and serine 148. Position 148 is a phosphoserine (serine 148). A chloride-binding site is contributed by asparagine 151. Over 159–165 the chain is Extracellular; it reads LTQGAKE. The segment at 161 to 181 is disordered; it reads QGAKEHEEAENITEGKKKPTK. A compositionally biased stretch (basic and acidic residues) spans 163-177; sequence AKEHEEAENITEGKK. Residues 166-188 traverse the membrane as a helical segment; sequence HEEAENITEGKKKPTKSPQMGTF. Over 189 to 211 the chain is Cytoplasmic; sequence MGVYLPCLQNIFGVILFLRLTWV. Residues 212-245 traverse the membrane as a helical segment; sequence VGTAGILQAFAIVLICCCCTMLTAISMSAIATNG. At 246-263 the chain is on the extracellular side; sequence VVPAGGSYFMISRALGPE. The next 2 helical transmembrane spans lie at 264 to 287 and 288 to 316; these read FGGA…ILGA and IEIF…AMLN. Tyrosine 283 contacts K(+). The Extracellular portion of the chain corresponds to 317 to 433; sequence NMRVYGTAFL…FVHNNVISIQ (117 aa). Cysteines 375 and 390 form a disulfide. N-linked (GlcNAc...) asparagine glycans are attached at residues asparagine 379, asparagine 398, asparagine 411, and asparagine 417. An intrachain disulfide couples cysteine 410 to cysteine 420. A helical transmembrane segment spans residues 434–454; sequence GIPGLASGIITENLWSNYLPK. Residues isoleucine 443, threonine 444, and asparagine 446 each coordinate K(+). Chloride is bound by residues isoleucine 443 and threonine 444. Chloride is bound by residues leucine 447 and tryptophan 448. Over 455–464 the chain is Cytoplasmic; sequence GEIIEKPSAK. A helical membrane pass occupies residues 465-487; sequence SSDVLGNLNHEYVLADITTSFTL. Residues 488-518 lie on the Extracellular side of the membrane; sequence LVGIFFPSVTGIMAGSNRSGDLKDAQKSIPI. K(+) is bound at residue threonine 497. The helical transmembrane segment at 519–545 threads the bilayer; sequence GTILAILTTSFVYLSNVVLFGACIEGV. At 546 to 568 the chain is on the cytoplasmic side; sequence VLRDKFGDAVKGNLVVGTLSWPS. Transmembrane regions (helical) follow at residues 569–589 and 590–612; these read PWVI…QSLT and GAPR…VFGH. Position 603 (isoleucine 603) interacts with chloride. Over 613–629 the chain is Cytoplasmic; that stretch reads SKANGEPTWALLLTAAI. Transmembrane regions (helical) follow at residues 630–649 and 650–665; these read AELG…LSMF and FLMC…ALQT. Residue tyrosine 654 coordinates chloride. Over 666–1150 the chain is Cytoplasmic; sequence LLRTPNWRPR…GGSEVITIYS (485 aa). The interval 682 to 691 is scissor helix; the sequence is ALSFMGMSIC. Serine 736 carries the post-translational modification Phosphoserine. Phosphothreonine is present on threonine 778. A Phosphoserine modification is found at serine 981. At threonine 991 the chain carries Phosphothreonine. Phosphoserine is present on residues serine 1023, serine 1029, and serine 1032. Threonine 1048 carries the post-translational modification Phosphothreonine. Position 1121 is a phosphotyrosine (tyrosine 1121).

It belongs to the SLC12A transporter family. K/Cl co-transporter subfamily. In terms of assembly, homodimer; adopts a domain-swap conformation at the scissor helices connecting the transmembrane domain and C-terminal domain. Heterodimer with K-Cl cotransporter SLC12A5. Interacts (via C-terminus) with CKB; the interaction may be required for potassium-chloride cotransport activity. Post-translationally, phosphorylated, phosphorylation regulates transporter activity. Phosphorylated at Thr-991 and Thr-1048 by OXSR1/OSR1 and STK39/SPAK downstream of WNK kinases (WNK1, WNK2, WNK3 or WNK4), inhibiting the potassium-chloride cotransport activity. In terms of processing, N-glycosylated. Expressed in hippocampus and corpus callosum (at protein level). Highly expressed throughout the brain and detected at lower levels in kidney. Highly expressed in highly myelinated white matter of the brain, but not in gray matter. Detected in the corpus callosum, in packed cell layers of the hippocampus and in Purkinje neurons within the cerebellum. Highly expressed in white matter in the spinal cord, but not in dorsal root ganglia or sciatic nerve. Colocalizes with the oligodendrocyte marker CNP. Expressed in hippocampus in CA1, and to a lesser extent CA3 pyramidal cells. Also expressed in cortex, mostly in large neurons and in the large cerebellar Purkinje cells. As to expression, highly expressed in kidney, but not detected in brain.

The protein localises to the cell membrane. It localises to the basolateral cell membrane. It carries out the reaction K(+)(in) + chloride(in) = K(+)(out) + chloride(out). With respect to regulation, inhibited following phosphorylation by OXSR1/OSR1 and STK39/SPAK: phosphorylation takes place downstream of WNK kinases (WNK1, WNK2, WNK3 or WNK4) in response to hyperosmotic stress and subsequent cell shrinkage. Its function is as follows. Mediates electroneutral potassium-chloride cotransport when activated by cell swelling. May contribute to cell volume homeostasis in single cells. Functionally, mediates electroneutral potassium-chloride cotransport when activated by cell swelling. May contribute to cell volume homeostasis in single cells. This chain is Solute carrier family 12 member 6 (Slc12a6), found in Mus musculus (Mouse).